We begin with the raw amino-acid sequence, 298 residues long: Protease HtpX (298 aa).

2 helical membrane-spanning segments follow: residues 4–24 (IGLF…TMNL) and 38–58 (LGNL…VSLA). H145 is a binding site for Zn(2+). E146 is an active-site residue. H149 contributes to the Zn(2+) binding site. The next 2 helical transmembrane spans lie at 160–180 (LLQG…AYVV) and 194–214 (ITFI…ASMI). E223 is a binding site for Zn(2+).

This sequence belongs to the peptidase M48B family. Zn(2+) is required as a cofactor.

It localises to the cell inner membrane. The polypeptide is Protease HtpX (Hydrogenovibrio crunogenus (strain DSM 25203 / XCL-2) (Thiomicrospira crunogena)).